The following is a 469-amino-acid chain: Glutamate--tRNA ligase 2 (469 aa).

Positions 10–20 (PSPTGYLHIGG) match the 'HIGH' region motif. Positions 99, 101, 126, and 128 each coordinate Zn(2+). The short motif at 237–241 (RLSKR) is the 'KMSKS' region element. Lysine 240 is an ATP binding site.

Belongs to the class-I aminoacyl-tRNA synthetase family. Glutamate--tRNA ligase type 1 subfamily. In terms of assembly, monomer. Zn(2+) serves as cofactor.

It is found in the cytoplasm. The catalysed reaction is tRNA(Glu) + L-glutamate + ATP = L-glutamyl-tRNA(Glu) + AMP + diphosphate. Its function is as follows. Catalyzes the attachment of glutamate to tRNA(Glu) in a two-step reaction: glutamate is first activated by ATP to form Glu-AMP and then transferred to the acceptor end of tRNA(Glu). The sequence is that of Glutamate--tRNA ligase 2 from Coxiella burnetii (strain CbuG_Q212) (Coxiella burnetii (strain Q212)).